The chain runs to 204 residues: Quinol oxidase subunit 3 (204 aa).

5 helical membrane passes run 27-47 (FWIF…TFFV), 66-86 (LVMI…IAVH), 95-115 (GVVI…GCEI), 140-160 (LLGT…GILI), and 184-204 (FLDV…LGGL).

Belongs to the cytochrome c oxidase subunit 3 family.

It localises to the cell membrane. The catalysed reaction is 2 a quinol + O2 = 2 a quinone + 2 H2O. Catalyzes quinol oxidation with the concomitant reduction of oxygen to water. Major component for energy conversion during vegetative growth. The sequence is that of Quinol oxidase subunit 3 (qoxC) from Bacillus spizizenii (strain ATCC 23059 / NRRL B-14472 / W23) (Bacillus subtilis subsp. spizizenii).